The following is a 368-amino-acid chain: Quinolinate synthase (368 aa).

His-46 and Ser-63 together coordinate iminosuccinate. Residue Cys-110 participates in [4Fe-4S] cluster binding. Iminosuccinate contacts are provided by residues 141–143 (YVN) and Ser-162. Cys-230 contributes to the [4Fe-4S] cluster binding site. Iminosuccinate is bound by residues 256–258 (HPE) and Thr-273. Position 320 (Cys-320) interacts with [4Fe-4S] cluster.

The protein belongs to the quinolinate synthase family. Type 3 subfamily. [4Fe-4S] cluster serves as cofactor.

The protein resides in the cytoplasm. It catalyses the reaction iminosuccinate + dihydroxyacetone phosphate = quinolinate + phosphate + 2 H2O + H(+). Its pathway is cofactor biosynthesis; NAD(+) biosynthesis; quinolinate from iminoaspartate: step 1/1. In terms of biological role, catalyzes the condensation of iminoaspartate with dihydroxyacetone phosphate to form quinolinate. This is Quinolinate synthase from Bacillus cereus (strain ZK / E33L).